Consider the following 344-residue polypeptide: MTQITLLTPDDWHLHFRDGDMLKETVPATARLFQRAIVMPNLLPPVTDAKMVIEYRERILAARPEGSDFEPLMTLFLTNDTTEQDIIDAKAAGVVAAKLYPAGATTNSDAAVKALDALFPIFEKMAEVGMLLLVHGEVTESHIDIFDREALFIERNLRRIVDAFPTLKVVFEHITTKEAADFVMSASDNVAATITPQHLLLNRNDLLVGGVRPHNFCLPVLKRNIHQEALRAAIATGSSKFFLGTDSAPHEKHRKESACGCAGCYSAWSALELYAQVFDDLGIIDKLEGFASIHGPDFYGLPRNTSTVTLVKEKWTVPSEIILPNGNPIVPFFAGEEVSWKVKS.

Positions 13 and 15 each coordinate Zn(2+). Substrate contacts are provided by residues 15-17 and Asn-41; that span reads HFR. Zn(2+) contacts are provided by Lys-98, His-135, and His-173. Lys-98 bears the N6-carboxylysine mark. Residue His-135 coordinates substrate. Leu-218 is a substrate binding site. Asp-246 serves as a coordination point for Zn(2+). The active site involves Asp-246. The substrate site is built by His-250 and Ala-262.

This sequence belongs to the metallo-dependent hydrolases superfamily. DHOase family. Class II DHOase subfamily. Homodimer. The cofactor is Zn(2+).

The enzyme catalyses (S)-dihydroorotate + H2O = N-carbamoyl-L-aspartate + H(+). It participates in pyrimidine metabolism; UMP biosynthesis via de novo pathway; (S)-dihydroorotate from bicarbonate: step 3/3. In terms of biological role, catalyzes the reversible cyclization of carbamoyl aspartate to dihydroorotate. In Shewanella sediminis (strain HAW-EB3), this protein is Dihydroorotase.